The primary structure comprises 154 residues: Cytochrome c-type biogenesis protein CcmE (154 aa).

The Cytoplasmic portion of the chain corresponds to 1–8 (MTPQRKRR). The helical; Signal-anchor for type II membrane protein transmembrane segment at 9–29 (LVMLAALAGGVGVAVALALAA) threads the bilayer. Topologically, residues 30–154 (LQQNINLFYS…GGTPAAEPQP (125 aa)) are periplasmic. Positions 124 and 128 each coordinate heme. Positions 130-154 (PPEAAHALKQGAATSGGTPAAEPQP) are disordered.

The protein belongs to the CcmE/CycJ family.

Its subcellular location is the cell inner membrane. Its function is as follows. Heme chaperone required for the biogenesis of c-type cytochromes. Transiently binds heme delivered by CcmC and transfers the heme to apo-cytochromes in a process facilitated by CcmF and CcmH. The chain is Cytochrome c-type biogenesis protein CcmE from Bordetella petrii (strain ATCC BAA-461 / DSM 12804 / CCUG 43448).